The chain runs to 275 residues: Large ribosomal subunit protein uL2 (275 aa).

2 disordered regions span residues 28–48 (KPYA…NNGR) and 223–275 (VVMN…RNKK).

This sequence belongs to the universal ribosomal protein uL2 family. In terms of assembly, part of the 50S ribosomal subunit. Forms a bridge to the 30S subunit in the 70S ribosome.

In terms of biological role, one of the primary rRNA binding proteins. Required for association of the 30S and 50S subunits to form the 70S ribosome, for tRNA binding and peptide bond formation. It has been suggested to have peptidyltransferase activity; this is somewhat controversial. Makes several contacts with the 16S rRNA in the 70S ribosome. In Photobacterium profundum (strain SS9), this protein is Large ribosomal subunit protein uL2.